The chain runs to 348 residues: MPPRIPNAPSSLLLQSSACSGSSSRCTASRLPTWASSCSSSSPQSSQPTTHQQQCSSFSTTAPAHVQSVRRQKMFSWLDKKGSAYKEHTRQGPNLLGGQGKDGLAVPFPNNPYFKSQPVLSEGSREIIYQDVMEKGLPIKAVSAKYNVDVRRVAAVIRLKEIEKRWIKEYKPLARPYARAVMKMLPQTVLGGPDQKPHESINDVHVHSYTTQQLFVPVSESREFTREDAAKAFGDHILPVDKKLRVPELIEFQKDLLKEVPLQEANRKFLNATAASEAKIAEREAKRRQAVEDAITRVKTDRFEFRFQEFNAENVGHDGRDRNAVGWRYGVPFPDRKRSQIKIPTKVE.

Residues 37-57 (SCSSSSPQSSQPTTHQQQCSS) are compositionally biased toward low complexity. Residues 37–63 (SCSSSSPQSSQPTTHQQQCSSFSTTAP) are disordered.

Belongs to the mitochondrion-specific ribosomal protein mS45 family. As to quaternary structure, component of the mitochondrial small ribosomal subunit (mt-SSU). Mature N.crassa 74S mitochondrial ribosomes consist of a small (37S) and a large (54S) subunit. The 37S small subunit contains a 16S ribosomal RNA (16S mt-rRNA) and 32 different proteins. The 54S large subunit contains a 23S rRNA (23S mt-rRNA) and 42 different proteins.

The protein resides in the mitochondrion. Functionally, component of the mitochondrial ribosome (mitoribosome), a dedicated translation machinery responsible for the synthesis of mitochondrial genome-encoded proteins, including at least some of the essential transmembrane subunits of the mitochondrial respiratory chain. The mitoribosomes are attached to the mitochondrial inner membrane and translation products are cotranslationally integrated into the membrane. The protein is Small ribosomal subunit protein mS45 (mrps35) of Neurospora crassa (strain ATCC 24698 / 74-OR23-1A / CBS 708.71 / DSM 1257 / FGSC 987).